Consider the following 295-residue polypeptide: Small ribosomal subunit protein mS23 (295 aa).

Residues 249 to 295 (IGSVVEEEKSQSSLFEDLLSNDNLQSEPEVEQSGQQQQQEQPKQETN) form a disordered region. Residues 273–289 (QSEPEVEQSGQQQQQEQ) are compositionally biased toward low complexity.

It belongs to the mitochondrion-specific ribosomal protein mS23 family. As to quaternary structure, component of the mitochondrial small ribosomal subunit (mt-SSU).

It localises to the mitochondrion. Functionally, component of the mitochondrial ribosome (mitoribosome), a dedicated translation machinery responsible for the synthesis of mitochondrial genome-encoded proteins, including at least some of the essential transmembrane subunits of the mitochondrial respiratory chain. The mitoribosomes are attached to the mitochondrial inner membrane and translation products are cotranslationally integrated into the membrane. The sequence is that of Small ribosomal subunit protein mS23 (RSM25) from Candida albicans (strain SC5314 / ATCC MYA-2876) (Yeast).